Consider the following 337-residue polypeptide: Holliday junction branch migration complex subunit RuvB (337 aa).

Residues 1 to 182 (MEDRMVSASY…FGVLSAMEFY (182 aa)) form a large ATPase domain (RuvB-L) region. Residues Leu-21, Arg-22, Gly-63, Lys-66, Thr-67, Thr-68, Arg-172, Tyr-182, and Arg-219 each contribute to the ATP site. Residue Thr-67 coordinates Mg(2+). The tract at residues 183 to 253 (NEDELKEIIL…IAKNALSLLE (71 aa)) is small ATPAse domain (RuvB-S). Residues 256–337 (GEGFDKIDNK…REFKEQTKLT (82 aa)) are head domain (RuvB-H). Residues Arg-311 and Arg-316 each coordinate DNA.

Belongs to the RuvB family. In terms of assembly, homohexamer. Forms an RuvA(8)-RuvB(12)-Holliday junction (HJ) complex. HJ DNA is sandwiched between 2 RuvA tetramers; dsDNA enters through RuvA and exits via RuvB. An RuvB hexamer assembles on each DNA strand where it exits the tetramer. Each RuvB hexamer is contacted by two RuvA subunits (via domain III) on 2 adjacent RuvB subunits; this complex drives branch migration. In the full resolvosome a probable DNA-RuvA(4)-RuvB(12)-RuvC(2) complex forms which resolves the HJ.

It localises to the cytoplasm. It carries out the reaction ATP + H2O = ADP + phosphate + H(+). The RuvA-RuvB-RuvC complex processes Holliday junction (HJ) DNA during genetic recombination and DNA repair, while the RuvA-RuvB complex plays an important role in the rescue of blocked DNA replication forks via replication fork reversal (RFR). RuvA specifically binds to HJ cruciform DNA, conferring on it an open structure. The RuvB hexamer acts as an ATP-dependent pump, pulling dsDNA into and through the RuvAB complex. RuvB forms 2 homohexamers on either side of HJ DNA bound by 1 or 2 RuvA tetramers; 4 subunits per hexamer contact DNA at a time. Coordinated motions by a converter formed by DNA-disengaged RuvB subunits stimulates ATP hydrolysis and nucleotide exchange. Immobilization of the converter enables RuvB to convert the ATP-contained energy into a lever motion, pulling 2 nucleotides of DNA out of the RuvA tetramer per ATP hydrolyzed, thus driving DNA branch migration. The RuvB motors rotate together with the DNA substrate, which together with the progressing nucleotide cycle form the mechanistic basis for DNA recombination by continuous HJ branch migration. Branch migration allows RuvC to scan DNA until it finds its consensus sequence, where it cleaves and resolves cruciform DNA. The sequence is that of Holliday junction branch migration complex subunit RuvB from Clostridium novyi (strain NT).